The sequence spans 278 residues: Small ribosomal subunit protein uS3 (278 aa).

The region spanning 38 to 106 (IRKLLATGLE…QVQLNILEVK (69 aa)) is the KH type-2 domain. Residues 215-278 (AAAAPAGADR…AAGQPETTES (64 aa)) form a disordered region. Positions 238 to 278 (SGASGTTATSTDAGRAATEEAPATDAAATAPAAGQPETTES) are enriched in low complexity.

The protein belongs to the universal ribosomal protein uS3 family. As to quaternary structure, part of the 30S ribosomal subunit. Forms a tight complex with proteins S10 and S14.

Its function is as follows. Binds the lower part of the 30S subunit head. Binds mRNA in the 70S ribosome, positioning it for translation. The chain is Small ribosomal subunit protein uS3 from Mycolicibacterium gilvum (strain PYR-GCK) (Mycobacterium gilvum (strain PYR-GCK)).